The primary structure comprises 236 residues: Phosphoribosylaminoimidazole-succinocarboxamide synthase (236 aa).

It belongs to the SAICAR synthetase family.

It carries out the reaction 5-amino-1-(5-phospho-D-ribosyl)imidazole-4-carboxylate + L-aspartate + ATP = (2S)-2-[5-amino-1-(5-phospho-beta-D-ribosyl)imidazole-4-carboxamido]succinate + ADP + phosphate + 2 H(+). Its pathway is purine metabolism; IMP biosynthesis via de novo pathway; 5-amino-1-(5-phospho-D-ribosyl)imidazole-4-carboxamide from 5-amino-1-(5-phospho-D-ribosyl)imidazole-4-carboxylate: step 1/2. The chain is Phosphoribosylaminoimidazole-succinocarboxamide synthase from Wolinella succinogenes (strain ATCC 29543 / DSM 1740 / CCUG 13145 / JCM 31913 / LMG 7466 / NCTC 11488 / FDC 602W) (Vibrio succinogenes).